A 154-amino-acid chain; its full sequence is Large ribosomal subunit protein uL13 (154 aa).

The protein belongs to the universal ribosomal protein uL13 family. Part of the 50S ribosomal subunit.

Functionally, this protein is one of the early assembly proteins of the 50S ribosomal subunit, although it is not seen to bind rRNA by itself. It is important during the early stages of 50S assembly. In Rhodospirillum rubrum (strain ATCC 11170 / ATH 1.1.1 / DSM 467 / LMG 4362 / NCIMB 8255 / S1), this protein is Large ribosomal subunit protein uL13.